The primary structure comprises 137 residues: Peptide methionine sulfoxide reductase MsrB (137 aa).

Residues 7–129 (AEELKKNLSD…NSASLRFTDG (123 aa)) form the MsrB domain. Zn(2+) contacts are provided by Cys-46, Cys-49, Cys-95, and Cys-98. Residue Cys-118 is the Nucleophile of the active site.

Belongs to the MsrB Met sulfoxide reductase family. Zn(2+) serves as cofactor.

The enzyme catalyses L-methionyl-[protein] + [thioredoxin]-disulfide + H2O = L-methionyl-(R)-S-oxide-[protein] + [thioredoxin]-dithiol. This chain is Peptide methionine sulfoxide reductase MsrB, found in Shigella dysenteriae serotype 1 (strain Sd197).